Consider the following 131-residue polypeptide: uncharacterized protein (131 aa).

The first 16 residues, 1-16 (MDVLFVAIFAVPLILG), serve as a signal peptide directing secretion.

The protein resides in the secreted. This is an uncharacterized protein from Homo sapiens (Human).